A 176-amino-acid polypeptide reads, in one-letter code: Large ribosomal subunit protein uL10 (176 aa).

It belongs to the universal ribosomal protein uL10 family. As to quaternary structure, part of the ribosomal stalk of the 50S ribosomal subunit. The N-terminus interacts with L11 and the large rRNA to form the base of the stalk. The C-terminus forms an elongated spine to which L12 dimers bind in a sequential fashion forming a multimeric L10(L12)X complex.

Its function is as follows. Forms part of the ribosomal stalk, playing a central role in the interaction of the ribosome with GTP-bound translation factors. In Nocardia farcinica (strain IFM 10152), this protein is Large ribosomal subunit protein uL10.